Reading from the N-terminus, the 551-residue chain is Calnexin (551 aa).

The signal sequence occupies residues 1 to 23; the sequence is MRPQNVAGVAGTGALIMAAGALA. Residues 24–477 lie on the Lumenal side of the membrane; the sequence is DQTVFHPTSL…QAIKQMPEVA (454 aa). A disordered region spans residues 293-315; it reads EEEPETIPDPEAEKPEEWDDEED. Residues 478-498 form a helical membrane-spanning segment; the sequence is AGLAAAVFTLLGMLLALFGFI. The Cytoplasmic segment spans residues 499–551; the sequence is GSAPTKVKQTTVKTKAVAPVAPAGEEEKKALDQAGVEIPAEGSKKRVTRSTKE. The interval 526–551 is disordered; it reads KKALDQAGVEIPAEGSKKRVTRSTKE.

Belongs to the calreticulin family.

The protein resides in the endoplasmic reticulum membrane. Its function is as follows. Endoplasmic reticulum (ER) chaperone that functions to stabilize non-native glycoproteins and retain them in the ER until they are properly folded or targeted for ER associated degradation (ERAD). With co-chaperone DNJ1, coordinately maintains ER homeostasis and contributes to maintenance of cell wall architecture. In Cryptococcus neoformans var. grubii serotype A (strain H99 / ATCC 208821 / CBS 10515 / FGSC 9487) (Filobasidiella neoformans var. grubii), this protein is Calnexin.